Consider the following 475-residue polypeptide: Ribulose bisphosphate carboxylase large chain (475 aa).

Positions 1–2 (MS) are excised as a propeptide. Proline 3 carries the N-acetylproline modification. Lysine 14 is modified (N6,N6,N6-trimethyllysine). Substrate is bound by residues asparagine 123 and threonine 173. Catalysis depends on lysine 175, which acts as the Proton acceptor. Lysine 177 lines the substrate pocket. Lysine 201, aspartate 203, and glutamate 204 together coordinate Mg(2+). Lysine 201 carries the N6-carboxylysine modification. Histidine 294 serves as the catalytic Proton acceptor. Residues arginine 295, histidine 327, and serine 379 each coordinate substrate.

It belongs to the RuBisCO large chain family. Type I subfamily. In terms of assembly, heterohexadecamer of 8 large chains and 8 small chains; disulfide-linked. The disulfide link is formed within the large subunit homodimers. The cofactor is Mg(2+). Post-translationally, the disulfide bond which can form in the large chain dimeric partners within the hexadecamer appears to be associated with oxidative stress and protein turnover.

The protein resides in the plastid. Its subcellular location is the chloroplast. It catalyses the reaction 2 (2R)-3-phosphoglycerate + 2 H(+) = D-ribulose 1,5-bisphosphate + CO2 + H2O. The catalysed reaction is D-ribulose 1,5-bisphosphate + O2 = 2-phosphoglycolate + (2R)-3-phosphoglycerate + 2 H(+). Its function is as follows. RuBisCO catalyzes two reactions: the carboxylation of D-ribulose 1,5-bisphosphate, the primary event in carbon dioxide fixation, as well as the oxidative fragmentation of the pentose substrate in the photorespiration process. Both reactions occur simultaneously and in competition at the same active site. The polypeptide is Ribulose bisphosphate carboxylase large chain (Cerastium glomeratum (Sticky chickweed)).